We begin with the raw amino-acid sequence, 378 residues long: Homoserine O-acetyltransferase (378 aa).

The region spanning 54 to 355 (NAILVCHALS…NNPAGHDSFL (302 aa)) is the AB hydrolase-1 domain. Residue serine 159 is the Nucleophile of the active site. Substrate is bound at residue arginine 228. Residues aspartate 318 and histidine 351 contribute to the active site. Position 352 (aspartate 352) interacts with substrate.

This sequence belongs to the AB hydrolase superfamily. MetX family. Homodimer.

It localises to the cytoplasm. It catalyses the reaction L-homoserine + acetyl-CoA = O-acetyl-L-homoserine + CoA. It participates in amino-acid biosynthesis; L-methionine biosynthesis via de novo pathway; O-acetyl-L-homoserine from L-homoserine: step 1/1. Its function is as follows. Transfers an acetyl group from acetyl-CoA to L-homoserine, forming acetyl-L-homoserine. This is Homoserine O-acetyltransferase from Leptospira biflexa serovar Patoc (strain Patoc 1 / Ames).